The sequence spans 178 residues: Gamma-crystallin S (178 aa).

At serine 2 the chain carries N-acetylserine. The segment at 2–5 (SKTG) is N-terminal arm. 2 consecutive Beta/gamma crystallin 'Greek key' domains span residues 6–44 (GKIS…RVEG) and 45–87 (GTWA…RAVH). The interval 88–93 (LSSGGQ) is connecting peptide. 2 Beta/gamma crystallin 'Greek key' domains span residues 94–134 (AKIQ…KVVE) and 135–177 (GTWI…RRIV).

The protein belongs to the beta/gamma-crystallin family. Monomer.

In terms of biological role, crystallins are the dominant structural components of the vertebrate eye lens. This chain is Gamma-crystallin S (Crygs), found in Mus musculus (Mouse).